Here is a 276-residue protein sequence, read N- to C-terminus: Large ribosomal subunit protein uL2 (276 aa).

A disordered region spans residues 223-276; the sequence is GVAMNPVDHPHGGGEGRGKGHHPTSPWGLPTKGYKTRRGKRPSDKFIVRRRNEV. Basic and acidic residues-rich tracts occupy residues 230 to 240 and 263 to 276; these read DHPHGGGEGRG and RPSD…RNEV.

It belongs to the universal ribosomal protein uL2 family. Part of the 50S ribosomal subunit. Forms a bridge to the 30S subunit in the 70S ribosome.

In terms of biological role, one of the primary rRNA binding proteins. Required for association of the 30S and 50S subunits to form the 70S ribosome, for tRNA binding and peptide bond formation. It has been suggested to have peptidyltransferase activity; this is somewhat controversial. Makes several contacts with the 16S rRNA in the 70S ribosome. This Thermotoga neapolitana (strain ATCC 49049 / DSM 4359 / NBRC 107923 / NS-E) protein is Large ribosomal subunit protein uL2.